A 271-amino-acid chain; its full sequence is Hachiman protein HamA (271 aa).

In terms of biological role, component of antiviral defense system Hachiman, composed of HamA and HamB. Expression of Hachiman in B.subtilis (strain BEST7003) confers resistance to phages phi105, phi29, phi3T, rho14, SBSphiJ, SpBeta and SPR. The chain is Hachiman protein HamA from Bacillus cereus.